The following is a 746-amino-acid chain: Probable ubiquitin carboxyl-terminal hydrolase MINDY-4 (746 aa).

3 disordered regions span residues aspartate 123–glutamate 179, methionine 198–glutamate 254, and glycine 319–methionine 342. Polar residues-rich tracts occupy residues tyrosine 141–serine 152 and threonine 165–valine 174. The Nucleophile role is filled by cysteine 448. Histidine 666 acts as the Proton acceptor in catalysis.

The protein belongs to the MINDY deubiquitinase family. FAM188 subfamily.

The catalysed reaction is Thiol-dependent hydrolysis of ester, thioester, amide, peptide and isopeptide bonds formed by the C-terminal Gly of ubiquitin (a 76-residue protein attached to proteins as an intracellular targeting signal).. Its function is as follows. Probable hydrolase that can remove 'Lys-48'-linked conjugated ubiquitin from proteins. The polypeptide is Probable ubiquitin carboxyl-terminal hydrolase MINDY-4 (mindy4) (Xenopus tropicalis (Western clawed frog)).